The sequence spans 118 residues: Large ribosomal subunit protein bL19 (118 aa).

This sequence belongs to the bacterial ribosomal protein bL19 family.

Its function is as follows. This protein is located at the 30S-50S ribosomal subunit interface and may play a role in the structure and function of the aminoacyl-tRNA binding site. This chain is Large ribosomal subunit protein bL19, found in Geobacter sulfurreducens (strain ATCC 51573 / DSM 12127 / PCA).